A 171-amino-acid polypeptide reads, in one-letter code: Co-chaperone protein HscB (171 aa).

A J domain is found at 2 to 74 (DYFTLFGLPA…LTRAEYLLSL (73 aa)).

It belongs to the HscB family. In terms of assembly, interacts with HscA and stimulates its ATPase activity. Interacts with IscU.

Co-chaperone involved in the maturation of iron-sulfur cluster-containing proteins. Seems to help targeting proteins to be folded toward HscA. The polypeptide is Co-chaperone protein HscB (Salmonella schwarzengrund (strain CVM19633)).